Reading from the N-terminus, the 302-residue chain is Oxygen-dependent coproporphyrinogen-III oxidase (302 aa).

Ser94 contacts substrate. His98 and His108 together coordinate a divalent metal cation. The Proton donor role is filled by His108. 110–112 (NVR) is a substrate binding site. A divalent metal cation contacts are provided by His147 and His177. The segment at 242 to 277 (YVEFNLVWDRGTLFGLQSGGRTESILMSMPPLARWE) is important for dimerization. Residue 260–262 (GGR) coordinates substrate.

The protein belongs to the aerobic coproporphyrinogen-III oxidase family. In terms of assembly, homodimer. It depends on a divalent metal cation as a cofactor.

Its subcellular location is the cytoplasm. It catalyses the reaction coproporphyrinogen III + O2 + 2 H(+) = protoporphyrinogen IX + 2 CO2 + 2 H2O. It participates in porphyrin-containing compound metabolism; protoporphyrin-IX biosynthesis; protoporphyrinogen-IX from coproporphyrinogen-III (O2 route): step 1/1. Involved in the heme biosynthesis. Catalyzes the aerobic oxidative decarboxylation of propionate groups of rings A and B of coproporphyrinogen-III to yield the vinyl groups in protoporphyrinogen-IX. This Photorhabdus laumondii subsp. laumondii (strain DSM 15139 / CIP 105565 / TT01) (Photorhabdus luminescens subsp. laumondii) protein is Oxygen-dependent coproporphyrinogen-III oxidase.